The following is a 508-amino-acid chain: Light-independent protochlorophyllide reductase subunit B (508 aa).

A [4Fe-4S] cluster-binding site is contributed by D36. D294 (proton donor) is an active-site residue. 429 to 430 contributes to the substrate binding site; the sequence is GM.

The protein belongs to the ChlB/BchB/BchZ family. As to quaternary structure, protochlorophyllide reductase is composed of three subunits; ChlL, ChlN and ChlB. Forms a heterotetramer of two ChlB and two ChlN subunits. The cofactor is [4Fe-4S] cluster.

The protein localises to the plastid. Its subcellular location is the chloroplast. The enzyme catalyses chlorophyllide a + oxidized 2[4Fe-4S]-[ferredoxin] + 2 ADP + 2 phosphate = protochlorophyllide a + reduced 2[4Fe-4S]-[ferredoxin] + 2 ATP + 2 H2O. Its pathway is porphyrin-containing compound metabolism; chlorophyll biosynthesis (light-independent). Its function is as follows. Component of the dark-operative protochlorophyllide reductase (DPOR) that uses Mg-ATP and reduced ferredoxin to reduce ring D of protochlorophyllide (Pchlide) to form chlorophyllide a (Chlide). This reaction is light-independent. The NB-protein (ChlN-ChlB) is the catalytic component of the complex. The protein is Light-independent protochlorophyllide reductase subunit B of Pyropia yezoensis (Susabi-nori).